Reading from the N-terminus, the 1096-residue chain is DNA-directed RNA polymerase subunit beta (1096 aa).

Residues 1070 to 1096 (LMQDVNPRRSTPSRPTYESLGSDYQED) form a disordered region.

The protein belongs to the RNA polymerase beta chain family. In cyanobacteria the RNAP catalytic core is composed of 2 alpha, 1 beta, 1 beta', 1 gamma and 1 omega subunit. When a sigma factor is associated with the core the holoenzyme is formed, which can initiate transcription.

It carries out the reaction RNA(n) + a ribonucleoside 5'-triphosphate = RNA(n+1) + diphosphate. In terms of biological role, DNA-dependent RNA polymerase catalyzes the transcription of DNA into RNA using the four ribonucleoside triphosphates as substrates. The polypeptide is DNA-directed RNA polymerase subunit beta (Prochlorococcus marinus (strain MIT 9211)).